Reading from the N-terminus, the 52-residue chain is ERMES regulator 1 (52 aa).

Over 1 to 27 (MIFFFNQIRSIFTALHTPTQQIQLSRR) the chain is Mitochondrial intermembrane. Residues 28–46 (AFFQFLGYLGSCVVISLAA) traverse the membrane as a helical segment. Over 47–52 (QSKYVQ) the chain is Cytoplasmic.

The protein belongs to the EMR1 family.

The protein resides in the mitochondrion outer membrane. In terms of biological role, mediates the formation of endoplasmic reticulum (ER)-mitochondria encounter structure (ERMES) foci, thereby contributing to the formation of ER-mitochondrial contact sites. The sequence is that of ERMES regulator 1 from Saccharomyces cerevisiae (strain ATCC 204508 / S288c) (Baker's yeast).